The sequence spans 25 residues: Chrysophsin-1 (25 aa).

The residue at position 25 (histidine 25) is a Histidine amide.

As to expression, gill. Localized in certain epithelial cells lining the surface of secondary lamellae and eosinophilic granule cell-like cells at the base of secondary lamellae.

Its subcellular location is the secreted. Its function is as follows. Has antibacterial activity against Gram-positive bacteria B.subtilis ATCC 6633, L.garvieae ATCC 49156 and S.iniae F-8502, and Gram-negative bacteria E.coli WT-2, V.anguillarum ATCC 19264, V.penaeicida KHA, V.harveyi ATCC 14126, V.vulnificus ATCC 33148, A.salmonicida NCMB 1102 and P.putida ATCC 12633. Has hemolytic activity against human red blood cells. Seems to disrupt the membranes by adopting an alpha helical conformation. May play a significant role in innate host defense. This Pagrus major (Red sea bream) protein is Chrysophsin-1.